Here is a 269-residue protein sequence, read N- to C-terminus: Phosphonoacetaldehyde hydrolase (269 aa).

Asp10 (nucleophile) is an active-site residue. 2 residues coordinate Mg(2+): Asp10 and Ala12. Residue Lys52 is the Schiff-base intermediate with substrate of the active site. Asp186 provides a ligand contact to Mg(2+).

This sequence belongs to the HAD-like hydrolase superfamily. PhnX family. As to quaternary structure, homodimer. The cofactor is Mg(2+).

The enzyme catalyses phosphonoacetaldehyde + H2O = acetaldehyde + phosphate + H(+). Involved in phosphonate degradation. The sequence is that of Phosphonoacetaldehyde hydrolase from Salmonella agona (strain SL483).